The following is a 388-amino-acid chain: Chorismate synthase (388 aa).

Residues Arg39 and Arg45 each contribute to the NADP(+) site. FMN contacts are provided by residues 130 to 132 (RSS), 251 to 252 (NA), Gly296, 311 to 315 (KPIPT), and Arg337.

This sequence belongs to the chorismate synthase family. Homotetramer. Requires FMNH2 as cofactor.

The enzyme catalyses 5-O-(1-carboxyvinyl)-3-phosphoshikimate = chorismate + phosphate. It functions in the pathway metabolic intermediate biosynthesis; chorismate biosynthesis; chorismate from D-erythrose 4-phosphate and phosphoenolpyruvate: step 7/7. Its function is as follows. Catalyzes the anti-1,4-elimination of the C-3 phosphate and the C-6 proR hydrogen from 5-enolpyruvylshikimate-3-phosphate (EPSP) to yield chorismate, which is the branch point compound that serves as the starting substrate for the three terminal pathways of aromatic amino acid biosynthesis. This reaction introduces a second double bond into the aromatic ring system. The protein is Chorismate synthase of Geobacillus thermodenitrificans (strain NG80-2).